A 260-amino-acid chain; its full sequence is Thiazole synthase (260 aa).

Residue Lys102 is the Schiff-base intermediate with DXP of the active site. Residues Gly163, 189 to 190 (AG), and 211 to 212 (NT) each bind 1-deoxy-D-xylulose 5-phosphate.

Belongs to the ThiG family. Homotetramer. Forms heterodimers with either ThiH or ThiS.

The protein resides in the cytoplasm. It carries out the reaction [ThiS sulfur-carrier protein]-C-terminal-Gly-aminoethanethioate + 2-iminoacetate + 1-deoxy-D-xylulose 5-phosphate = [ThiS sulfur-carrier protein]-C-terminal Gly-Gly + 2-[(2R,5Z)-2-carboxy-4-methylthiazol-5(2H)-ylidene]ethyl phosphate + 2 H2O + H(+). It participates in cofactor biosynthesis; thiamine diphosphate biosynthesis. Its function is as follows. Catalyzes the rearrangement of 1-deoxy-D-xylulose 5-phosphate (DXP) to produce the thiazole phosphate moiety of thiamine. Sulfur is provided by the thiocarboxylate moiety of the carrier protein ThiS. In vitro, sulfur can be provided by H(2)S. This is Thiazole synthase from Geobacter metallireducens (strain ATCC 53774 / DSM 7210 / GS-15).